Reading from the N-terminus, the 1331-residue chain is ABC multidrug transporter MDR2 (1331 aa).

Positions 1–50 (MVEPSEKPNTQNDDVSKQEIRNPVSSSSSTSDKEKVAKKGNSDATKSLTP) are disordered. Over residues 31 to 41 (SDKEKVAKKGN) the composition is skewed to basic and acidic residues. The next 4 membrane-spanning stretches (helical) occupy residues 93–113 (MILL…LPLF), 147–167 (YFVY…VGFI), 219–239 (KVGL…IGYV), and 242–262 (WKLA…MGGI). One can recognise an ABC transmembrane type-1 1 domain in the interval 97–387 (AIVSLASIAA…VAPNTQAFAS (291 aa)). Asparagine 293 carries N-linked (GlcNAc...) asparagine glycosylation. Transmembrane regions (helical) follow at residues 325–345 (LGIM…LGFW) and 358–378 (LSAI…IGNV). The ABC transporter 1 domain occupies 422–667 (IEFRGIKHIY…KGTYLQLVEA (246 aa)). 457–464 (GPSGSGKS) is a binding site for ATP. Residue asparagine 529 is glycosylated (N-linked (GlcNAc...) asparagine). Helical transmembrane passes span 762–782 (LCGF…SVFF) and 808–828 (LMFL…GVIF). In terms of domain architecture, ABC transmembrane type-1 2 spans 764-1051 (GFFFAVLSGA…VFSFSPDMGK (288 aa)). Residue asparagine 860 is glycosylated (N-linked (GlcNAc...) asparagine). The next 4 membrane-spanning stretches (helical) occupy residues 884–904 (LGTI…ALAF), 910–930 (LVCI…FWIL), 995–1015 (ASQS…GGLL), and 1025–1045 (FFLC…VFSF). One can recognise an ABC transporter 2 domain in the interval 1086-1324 (IEFRDVHFRY…KGRYYELVHM (239 aa)). The N-linked (GlcNAc...) asparagine glycan is linked to asparagine 1108. Residue 1121 to 1128 (GPSGCGKS) coordinates ATP.

The protein belongs to the ABC transporter superfamily. ABCB family. Multidrug resistance exporter (TC 3.A.1.201) subfamily.

Its subcellular location is the cell membrane. The enzyme catalyses itraconazole(in) + ATP + H2O = itraconazole(out) + ADP + phosphate + H(+). Its function is as follows. ABC-type efflux transporter involved in the modulation susceptibility to itraconazole. In Trichophyton rubrum (strain ATCC MYA-4607 / CBS 118892) (Athlete's foot fungus), this protein is ABC multidrug transporter MDR2.